A 178-amino-acid chain; its full sequence is uncharacterized protein (178 aa).

This is an uncharacterized protein from Acanthamoeba polyphaga mimivirus (APMV).